Consider the following 235-residue polypeptide: Small ribosomal subunit protein uS2c (235 aa).

The protein belongs to the universal ribosomal protein uS2 family.

It localises to the plastid. The protein localises to the chloroplast. This chain is Small ribosomal subunit protein uS2c (rps2), found in Marchantia polymorpha (Common liverwort).